Consider the following 176-residue polypeptide: MKTKNNIALIGFMGAGKSSISKLLSEKLGKPLVSTDACIETREGLSISHIFKENGEDYFRQMESKVLEDICQNPNQIIDCGGGIVTRPHNLSIMRLNCLVVYLESRPEDLENRLKNHTNRPLFNAERSDKMLKLLESRLPLYRDAADITVSTHNKSCHEVCEEIEDSLRKYENTSG.

14-19 (GAGKSS) lines the ATP pocket. Serine 18 is a Mg(2+) binding site. 3 residues coordinate substrate: aspartate 36, arginine 60, and glycine 82. Arginine 120 is a binding site for ATP. Substrate is bound at residue arginine 138.

Belongs to the shikimate kinase family. In terms of assembly, monomer. Mg(2+) serves as cofactor.

It is found in the cytoplasm. It carries out the reaction shikimate + ATP = 3-phosphoshikimate + ADP + H(+). It functions in the pathway metabolic intermediate biosynthesis; chorismate biosynthesis; chorismate from D-erythrose 4-phosphate and phosphoenolpyruvate: step 5/7. In terms of biological role, catalyzes the specific phosphorylation of the 3-hydroxyl group of shikimic acid using ATP as a cosubstrate. This chain is Shikimate kinase, found in Dehalococcoides mccartyi (strain ATCC BAA-2100 / JCM 16839 / KCTC 5957 / BAV1).